A 242-amino-acid chain; its full sequence is UPF0157 protein PA4798 (242 aa).

Residues 215-242 are disordered; the sequence is AGAESTPGGPADTAYFESLRSRVSKPQD.

This sequence belongs to the UPF0157 (GrpB) family.

This Pseudomonas aeruginosa (strain ATCC 15692 / DSM 22644 / CIP 104116 / JCM 14847 / LMG 12228 / 1C / PRS 101 / PAO1) protein is UPF0157 protein PA4798.